The chain runs to 234 residues: Cytochrome b (234 aa).

A run of 4 helical transmembrane segments spans residues phenylalanine 33–methionine 53, tryptophan 77–valine 98, tryptophan 113–leucine 133, and phenylalanine 178–leucine 198. Histidine 83 and histidine 97 together coordinate heme b. Heme b contacts are provided by histidine 182 and histidine 196. A ubiquinone is bound at residue histidine 201. The helical transmembrane segment at isoleucine 226–valine 234 threads the bilayer.

Belongs to the cytochrome b family. As to quaternary structure, the cytochrome bc1 complex contains 11 subunits: 3 respiratory subunits (MT-CYB, CYC1 and UQCRFS1), 2 core proteins (UQCRC1 and UQCRC2) and 6 low-molecular weight proteins (UQCRH/QCR6, UQCRB/QCR7, UQCRQ/QCR8, UQCR10/QCR9, UQCR11/QCR10 and a cleavage product of UQCRFS1). This cytochrome bc1 complex then forms a dimer. The cofactor is heme b.

It is found in the mitochondrion inner membrane. Component of the ubiquinol-cytochrome c reductase complex (complex III or cytochrome b-c1 complex) that is part of the mitochondrial respiratory chain. The b-c1 complex mediates electron transfer from ubiquinol to cytochrome c. Contributes to the generation of a proton gradient across the mitochondrial membrane that is then used for ATP synthesis. This chain is Cytochrome b (MT-CYB), found in Lepus arcticus (Arctic hare).